A 283-amino-acid polypeptide reads, in one-letter code: Short-chain dehydrogenase cctT (283 aa).

A signal peptide spans 1 to 20 (MLKTVLITGCSHGGLGAAMA). Ile-7, Thr-33, Lys-39, Glu-55, and Asn-83 together coordinate NADP(+). Asn-131 is a glycosylation site (N-linked (GlcNAc...) asparagine). The Proton donor role is filled by Ser-133. Residues Tyr-147, Arg-151, Val-180, and Thr-182 each coordinate NADP(+). The active-site Proton acceptor is the Tyr-147.

The protein belongs to the short-chain dehydrogenases/reductases (SDR) family.

In terms of biological role, short-chain dehydrogenase; part of the gene cluster that mediates the biosynthesis of the mycotoxin cyclochlorotine, a hepatotoxic and carcinogenic cyclic chlorinated pentapeptide. The function of cctT within the pathway, if any, remains undetermined. The NRPS cctN initially catalyzes the condensation of L-serine (Ser), Pro, L-2-aminobutyrate (2Abu), Ser, and beta-Phe in this order to produce isocyclotine. After the dichlorination of Pro2 catalyzed by cctP2 to produce isocyclochlorotine, the cctO-mediated transacylation of isocyclochlorotine can furnish cyclochlorotine. The subsequent hydroxylation of cyclochlorotine by cctR yields hydroxycyclochlorotine as the final product. CctP1 probably acts as a phenylalanine aminomutase and provides the uncommon building block beta-Phe. Furthermore, 2Abu can be synthesized from threonine by one of the threonine dehydratases and transaminases localized outside of the cluster. The functions of the remaining proteins encoded by the cluster, cctM and cctT, have not been identified yet. This chain is Short-chain dehydrogenase cctT, found in Talaromyces islandicus (Penicillium islandicum).